Reading from the N-terminus, the 159-residue chain is Small ribosomal subunit protein bS16 (159 aa).

Positions Gly-102–Ala-119 are enriched in low complexity. The segment at Gly-102–Ala-159 is disordered. Residues Glu-120 to Leu-129 are compositionally biased toward acidic residues. Positions Ser-130–Glu-145 are enriched in low complexity.

The protein belongs to the bacterial ribosomal protein bS16 family.

This chain is Small ribosomal subunit protein bS16, found in Synechococcus sp. (strain JA-2-3B'a(2-13)) (Cyanobacteria bacterium Yellowstone B-Prime).